Consider the following 363-residue polypeptide: UDP-N-acetylglucosamine--N-acetylmuramyl-(pentapeptide) pyrophosphoryl-undecaprenol N-acetylglucosamine transferase (363 aa).

UDP-N-acetyl-alpha-D-glucosamine-binding positions include 12-14 (TGG), N122, R164, S191, I245, and Q290.

The protein belongs to the glycosyltransferase 28 family. MurG subfamily.

Its subcellular location is the cell membrane. The enzyme catalyses di-trans,octa-cis-undecaprenyl diphospho-N-acetyl-alpha-D-muramoyl-L-alanyl-D-glutamyl-meso-2,6-diaminopimeloyl-D-alanyl-D-alanine + UDP-N-acetyl-alpha-D-glucosamine = di-trans,octa-cis-undecaprenyl diphospho-[N-acetyl-alpha-D-glucosaminyl-(1-&gt;4)]-N-acetyl-alpha-D-muramoyl-L-alanyl-D-glutamyl-meso-2,6-diaminopimeloyl-D-alanyl-D-alanine + UDP + H(+). The protein operates within cell wall biogenesis; peptidoglycan biosynthesis. Cell wall formation. Catalyzes the transfer of a GlcNAc subunit on undecaprenyl-pyrophosphoryl-MurNAc-pentapeptide (lipid intermediate I) to form undecaprenyl-pyrophosphoryl-MurNAc-(pentapeptide)GlcNAc (lipid intermediate II). The protein is UDP-N-acetylglucosamine--N-acetylmuramyl-(pentapeptide) pyrophosphoryl-undecaprenol N-acetylglucosamine transferase of Lawsonia intracellularis (strain PHE/MN1-00).